A 154-amino-acid polypeptide reads, in one-letter code: 3-hydroxyacyl-[acyl-carrier-protein] dehydratase FabZ (154 aa).

His-54 is an active-site residue.

The protein belongs to the thioester dehydratase family. FabZ subfamily.

Its subcellular location is the cytoplasm. The enzyme catalyses a (3R)-hydroxyacyl-[ACP] = a (2E)-enoyl-[ACP] + H2O. Its function is as follows. Involved in unsaturated fatty acids biosynthesis. Catalyzes the dehydration of short chain beta-hydroxyacyl-ACPs and long chain saturated and unsaturated beta-hydroxyacyl-ACPs. In Shewanella sp. (strain MR-4), this protein is 3-hydroxyacyl-[acyl-carrier-protein] dehydratase FabZ.